A 213-amino-acid polypeptide reads, in one-letter code: Kynurenine formamidase (213 aa).

Tryptophan 18 contributes to the substrate binding site. Zn(2+) contacts are provided by histidine 48, histidine 52, and aspartate 54. The Proton donor/acceptor role is filled by histidine 58. Residues histidine 160 and glutamate 172 each contribute to the Zn(2+) site.

Belongs to the Cyclase 1 superfamily. KynB family. As to quaternary structure, homodimer. Zn(2+) is required as a cofactor.

The enzyme catalyses N-formyl-L-kynurenine + H2O = L-kynurenine + formate + H(+). It participates in amino-acid degradation; L-tryptophan degradation via kynurenine pathway; L-kynurenine from L-tryptophan: step 2/2. In terms of biological role, catalyzes the hydrolysis of N-formyl-L-kynurenine to L-kynurenine, the second step in the kynurenine pathway of tryptophan degradation. The sequence is that of Kynurenine formamidase from Burkholderia cenocepacia (strain HI2424).